A 149-amino-acid polypeptide reads, in one-letter code: D-aminoacyl-tRNA deacylase (149 aa).

A Gly-cisPro motif, important for rejection of L-amino acids motif is present at residues 137-138 (GP).

The protein belongs to the DTD family. Homodimer.

The protein resides in the cytoplasm. It catalyses the reaction glycyl-tRNA(Ala) + H2O = tRNA(Ala) + glycine + H(+). The enzyme catalyses a D-aminoacyl-tRNA + H2O = a tRNA + a D-alpha-amino acid + H(+). In terms of biological role, an aminoacyl-tRNA editing enzyme that deacylates mischarged D-aminoacyl-tRNAs. Also deacylates mischarged glycyl-tRNA(Ala), protecting cells against glycine mischarging by AlaRS. Acts via tRNA-based rather than protein-based catalysis; rejects L-amino acids rather than detecting D-amino acids in the active site. By recycling D-aminoacyl-tRNA to D-amino acids and free tRNA molecules, this enzyme counteracts the toxicity associated with the formation of D-aminoacyl-tRNA entities in vivo and helps enforce protein L-homochirality. The protein is D-aminoacyl-tRNA deacylase of Caldicellulosiruptor saccharolyticus (strain ATCC 43494 / DSM 8903 / Tp8T 6331).